The chain runs to 435 residues: 5-methylthioadenosine/S-adenosylhomocysteine deaminase (435 aa).

Zn(2+)-binding residues include His65 and His67. Residues Glu94, Arg150, and His189 each contribute to the substrate site. A Zn(2+)-binding site is contributed by His216. Substrate contacts are provided by Glu219 and Asp304. A Zn(2+)-binding site is contributed by Asp304.

It belongs to the metallo-dependent hydrolases superfamily. MTA/SAH deaminase family. Requires Zn(2+) as cofactor.

It catalyses the reaction S-adenosyl-L-homocysteine + H2O + H(+) = S-inosyl-L-homocysteine + NH4(+). The catalysed reaction is S-methyl-5'-thioadenosine + H2O + H(+) = S-methyl-5'-thioinosine + NH4(+). Its function is as follows. Catalyzes the deamination of 5-methylthioadenosine and S-adenosyl-L-homocysteine into 5-methylthioinosine and S-inosyl-L-homocysteine, respectively. Is also able to deaminate adenosine. This Bacillus cereus (strain G9842) protein is 5-methylthioadenosine/S-adenosylhomocysteine deaminase.